Here is a 228-residue protein sequence, read N- to C-terminus: CD302 antigen (228 aa).

A signal peptide spans 1-20 (MPHAALSSLVLLSLATAIFA). Residues 21–165 (DCPSSIWVQF…YDKKYLSDNH (145 aa)) lie on the Extracellular side of the membrane. The C-type lectin domain occupies 30–149 (FQGSCYTFLQ…CEMSSVTGTL (120 aa)). Asn-107 carries N-linked (GlcNAc...) asparagine glycosylation. A disulfide bond links Cys-125 and Cys-140. A helical membrane pass occupies residues 166 to 186 (ILISTLVIASTVTLAVLGAVI). At 187–228 (WFLYRRSARSGFTSFSPAPQSPYSDGCALVVSEEDEYSVQLD) the chain is on the cytoplasmic side.

Its subcellular location is the membrane. It is found in the cell projection. The protein resides in the filopodium. The protein localises to the cytoplasm. It localises to the cell cortex. Its subcellular location is the microvillus. Functionally, potential multifunctional C-type lectin receptor that may play roles in endocytosis and phagocytosis as well as in cell adhesion and migration. This is CD302 antigen (Cd302) from Rattus norvegicus (Rat).